The following is a 392-amino-acid chain: S-adenosylmethionine synthase (392 aa).

Residue H15 coordinates ATP. D17 is a binding site for Mg(2+). E43 contributes to the K(+) binding site. The L-methionine site is built by E56 and Q99. The interval 99 to 109 is flexible loop; sequence QSKDIAQGVDE. ATP-binding positions include 173-175, 239-240, D248, 254-255, A271, and K275; these read DGK, KF, and RK. Residue D248 participates in L-methionine binding. K279 provides a ligand contact to L-methionine.

It belongs to the AdoMet synthase family. Homotetramer; dimer of dimers. Mg(2+) is required as a cofactor. K(+) serves as cofactor.

It is found in the cytoplasm. The enzyme catalyses L-methionine + ATP + H2O = S-adenosyl-L-methionine + phosphate + diphosphate. The protein operates within amino-acid biosynthesis; S-adenosyl-L-methionine biosynthesis; S-adenosyl-L-methionine from L-methionine: step 1/1. Its function is as follows. Catalyzes the formation of S-adenosylmethionine (AdoMet) from methionine and ATP. The overall synthetic reaction is composed of two sequential steps, AdoMet formation and the subsequent tripolyphosphate hydrolysis which occurs prior to release of AdoMet from the enzyme. The polypeptide is S-adenosylmethionine synthase (Finegoldia magna (strain ATCC 29328 / DSM 20472 / WAL 2508) (Peptostreptococcus magnus)).